The following is a 66-amino-acid chain: Conotoxin Lt3.5 (66 aa).

The first 20 residues, 1–20 (MMSKLGALLTICLLLFPLTA), serve as a signal peptide directing secretion. Residues 21–53 (VPLDGDQPLDRHAERMHDGISPKRHPWFDPVKR) constitute a propeptide that is removed on maturation. 3 disulfides stabilise this stretch: Cys54/Cys66, Cys55/Cys62, and Cys59/Cys65. At Pro64 the chain carries 4-hydroxyproline.

It belongs to the conotoxin M superfamily. As to expression, expressed by the venom duct.

The protein resides in the secreted. This Conus litteratus (Lettered cone) protein is Conotoxin Lt3.5.